The chain runs to 216 residues: Transmembrane emp24 domain-containing protein eca (216 aa).

The signal sequence occupies residues 1 to 20 (MRDQFISLALMLCILHSACG). At 21 to 182 (LYFHISETER…FRHTSESTNS (162 aa)) the chain is on the lumenal side. The GOLD domain maps to 30–126 (RKCFIEEVPD…QLRVHLDIQV (97 aa)). Residues 134-164 (ANVAQKEKLTELQLRIRQLLDQVEQITKEQN) are a coiled coil. The chain crosses the membrane as a helical span at residues 183-203 (RVLWWSLAQTVVLVCMGFWQM). Residues 204 to 216 (RHLKSFFEAKKLV) lie on the Cytoplasmic side of the membrane. The Prevents secretion from ER signature appears at 213 to 216 (KKLV).

This sequence belongs to the EMP24/GP25L family.

It localises to the endoplasmic reticulum membrane. Eca and bai are essential, though not redundant, for dorsoventral patterning of the embryo. Specifically required during early embryogenesis for the activity of maternal tkv, while the zygotic tkv is not affected. Involved in Golgi organization. The polypeptide is Transmembrane emp24 domain-containing protein eca (Drosophila erecta (Fruit fly)).